A 337-amino-acid polypeptide reads, in one-letter code: MLYSIVKPWLFRLDAERAHDFTLKNLKRLERSGLLNLYPRPPKCKQRQVMGINFPNPVGLAAGLDKNGAYIDALAGLGFGFIEIGTITPRPQPGNPKPRMFRLPEAQGVINRFGFNNLGVDVLLRNVAATKYKGVLGINIGKNFDTPNERAVDDYLHCLRKVYPYAHYVTVNISSPNTKNLRALQEKEALGQLLHALKQEQQVLADQHGRYVPIALKIAPDLDEGQVADIAALLMKHQFDGVIATNTTLARDMVQALPCAQEAGGLSGAPLRDRSTAVIQSLSNHLAGALPIIGVGGILSGEDAEQKIKAGASLVQVYSGLVYRGPVLVDDICRTLG.

FMN is bound by residues 62–66 (AGLDK) and Thr-86. Lys-66 lines the substrate pocket. 111 to 115 (NRFGF) provides a ligand contact to substrate. 2 residues coordinate FMN: Asn-139 and Asn-172. Residue Asn-172 participates in substrate binding. The Nucleophile role is filled by Ser-175. Asn-177 lines the substrate pocket. The FMN site is built by Lys-217 and Thr-245. Residue 246–247 (NT) participates in substrate binding. FMN is bound by residues Gly-268, Gly-297, and 318-319 (YS).

Belongs to the dihydroorotate dehydrogenase family. Type 2 subfamily. Monomer. Requires FMN as cofactor.

It localises to the cell membrane. It catalyses the reaction (S)-dihydroorotate + a quinone = orotate + a quinol. The protein operates within pyrimidine metabolism; UMP biosynthesis via de novo pathway; orotate from (S)-dihydroorotate (quinone route): step 1/1. Its function is as follows. Catalyzes the conversion of dihydroorotate to orotate with quinone as electron acceptor. The protein is Dihydroorotate dehydrogenase (quinone) of Methylobacillus flagellatus (strain ATCC 51484 / DSM 6875 / VKM B-1610 / KT).